The sequence spans 141 residues: Small ribosomal subunit protein uS12 (141 aa).

It belongs to the universal ribosomal protein uS12 family. As to quaternary structure, part of the 30S ribosomal subunit.

In terms of biological role, with S4 and S5 plays an important role in translational accuracy. Located at the interface of the 30S and 50S subunits. This Methanobrevibacter smithii (strain ATCC 35061 / DSM 861 / OCM 144 / PS) protein is Small ribosomal subunit protein uS12.